A 170-amino-acid polypeptide reads, in one-letter code: Large ribosomal subunit protein uL11 (170 aa).

It belongs to the universal ribosomal protein uL11 family. Part of the ribosomal stalk of the 50S ribosomal subunit. Interacts with L10 and the large rRNA to form the base of the stalk. L10 forms an elongated spine to which L12 dimers bind in a sequential fashion forming a multimeric L10(L12)X complex.

In terms of biological role, forms part of the ribosomal stalk which helps the ribosome interact with GTP-bound translation factors. In Saccharolobus solfataricus (strain ATCC 35092 / DSM 1617 / JCM 11322 / P2) (Sulfolobus solfataricus), this protein is Large ribosomal subunit protein uL11.